The following is a 249-amino-acid chain: Eukaryotic translation initiation factor 3 subunit K (249 aa).

The PCI domain maps to 46–222 (FDCYANLALL…VKVPSNKENE (177 aa)).

Belongs to the eIF-3 subunit K family. As to quaternary structure, component of the eukaryotic translation initiation factor 3 (eIF-3) complex.

The protein resides in the cytoplasm. Functionally, component of the eukaryotic translation initiation factor 3 (eIF-3) complex, which is involved in protein synthesis of a specialized repertoire of mRNAs and, together with other initiation factors, stimulates binding of mRNA and methionyl-tRNAi to the 40S ribosome. The eIF-3 complex specifically targets and initiates translation of a subset of mRNAs involved in cell proliferation. This chain is Eukaryotic translation initiation factor 3 subunit K, found in Aspergillus clavatus (strain ATCC 1007 / CBS 513.65 / DSM 816 / NCTC 3887 / NRRL 1 / QM 1276 / 107).